Reading from the N-terminus, the 66-residue chain is Large ribosomal subunit protein bL32 (66 aa).

Positions 1 to 19 (MAVPKRKMSRSNTRARRSQ) are enriched in basic residues. Residues 1 to 20 (MAVPKRKMSRSNTRARRSQW) are disordered.

The protein belongs to the bacterial ribosomal protein bL32 family.

The sequence is that of Large ribosomal subunit protein bL32 from Beutenbergia cavernae (strain ATCC BAA-8 / DSM 12333 / CCUG 43141 / JCM 11478 / NBRC 16432 / NCIMB 13614 / HKI 0122).